The primary structure comprises 318 residues: Mitochondrial coenzyme A transporter SLC25A42 (318 aa).

3 Solcar repeats span residues 31-117 (RQVL…YKRI), 129-214 (LPPW…LKSL), and 224-312 (PYPF…MQIL). Transmembrane regions (helical) follow at residues 33-53 (VLSS…AVAP), 89-109 (LWRG…IQFS), 135-155 (LLAG…LDLV), 186-206 (LYFG…LSFF), 230-250 (MVFG…LDVV), and 293-313 (LKGP…QILL).

Belongs to the mitochondrial carrier (TC 2.A.29) family.

The protein resides in the mitochondrion inner membrane. The catalysed reaction is ADP(out) + CoA(in) = ADP(in) + CoA(out). It carries out the reaction 3'-dephospho-CoA(in) + ADP(out) = 3'-dephospho-CoA(out) + ADP(in). It catalyses the reaction adenosine 3',5'-bisphosphate(in) + ADP(out) = adenosine 3',5'-bisphosphate(out) + ADP(in). The enzyme catalyses AMP(in) + ADP(out) = AMP(out) + ADP(in). The catalysed reaction is dADP(in) + ADP(out) = dADP(out) + ADP(in). It carries out the reaction ADP(in) + ATP(out) = ADP(out) + ATP(in). Functionally, mitochondrial carrier mediating the transport of coenzyme A (CoA) in mitochondria in exchange for intramitochondrial (deoxy)adenine nucleotides and adenosine 3',5'-diphosphate. The protein is Mitochondrial coenzyme A transporter SLC25A42 (Slc25a42) of Mus musculus (Mouse).